Reading from the N-terminus, the 324-residue chain is Quinolinate synthase 1 (324 aa).

2 residues coordinate iminosuccinate: His-48 and Ser-66. Position 111 (Cys-111) interacts with [4Fe-4S] cluster. Iminosuccinate-binding positions include 137-139 (YVN) and Ser-154. Cys-196 provides a ligand contact to [4Fe-4S] cluster. Residues 222-224 (HPE) and Thr-239 each bind iminosuccinate. [4Fe-4S] cluster is bound at residue Cys-282.

It belongs to the quinolinate synthase family. Type 2 subfamily. The cofactor is [4Fe-4S] cluster.

The protein resides in the cytoplasm. It catalyses the reaction iminosuccinate + dihydroxyacetone phosphate = quinolinate + phosphate + 2 H2O + H(+). It participates in cofactor biosynthesis; NAD(+) biosynthesis; quinolinate from iminoaspartate: step 1/1. Functionally, catalyzes the condensation of iminoaspartate with dihydroxyacetone phosphate to form quinolinate. This chain is Quinolinate synthase 1, found in Mesorhizobium japonicum (strain LMG 29417 / CECT 9101 / MAFF 303099) (Mesorhizobium loti (strain MAFF 303099)).